The chain runs to 512 residues: Maturase K (512 aa).

This sequence belongs to the intron maturase 2 family. MatK subfamily.

It localises to the plastid. The protein resides in the chloroplast. In terms of biological role, usually encoded in the trnK tRNA gene intron. Probably assists in splicing its own and other chloroplast group II introns. The protein is Maturase K of Acer campestre (Field maple).